The following is a 512-amino-acid chain: Annexin A7 (512 aa).

The segment covering 14-38 has biased composition (low complexity); that stretch reads GYPGGDPSYPPAAQQAFPGGQFPPA. Disordered stretches follow at residues 14 to 62 and 146 to 190; these read GYPG…GYPH and GGFS…AQPT. Over residues 39–52 the composition is skewed to gly residues; it reads AGGGAFPPASGGGN. Residues 164-182 are compositionally biased toward low complexity; sequence MPGQMPGQMPGQAPSGYPS. Annexin repeat units lie at residues 209-279, 280-351, 364-436, and 440-511; these read FDAL…ALFM, PSTY…SIMA, QQAE…AVLQ, and NRPL…AISG.

It belongs to the annexin family.

Functionally, calcium/phospholipid-binding protein which promotes membrane fusion and is involved in exocytosis. The sequence is that of Annexin A7 (anxa7) from Xenopus laevis (African clawed frog).